The following is a 518-amino-acid chain: Phosphoacetylglucosamine mutase 1 (518 aa).

At Thr49 the chain carries Phosphothreonine. Ser51 (phosphoserine intermediate) is an active-site residue. Mg(2+)-binding residues include Ser51, Asp267, Asp269, and Asp271. Ser51 is modified (phosphoserine). Residues 360 to 362, 486 to 490, and Arg495 each bind substrate; these read EAN and RASGT.

Belongs to the phosphohexose mutase family. Mg(2+) is required as a cofactor.

The protein resides in the cytoplasm. It localises to the nucleus. It carries out the reaction N-acetyl-alpha-D-glucosamine 1-phosphate = N-acetyl-D-glucosamine 6-phosphate. It participates in nucleotide-sugar biosynthesis; UDP-N-acetyl-alpha-D-glucosamine biosynthesis; N-acetyl-alpha-D-glucosamine 1-phosphate from alpha-D-glucosamine 6-phosphate (route I): step 2/2. Its function is as follows. Catalyzes the conversion of GlcNAc-6-P into GlcNAc-1-P during the synthesis of uridine diphosphate/UDP-GlcNAc, which is a biosynthetic precursor of chitin and also supplies the amino sugars for N-linked oligosaccharides of glycoproteins. This chain is Phosphoacetylglucosamine mutase 1, found in Schizosaccharomyces pombe (strain 972 / ATCC 24843) (Fission yeast).